The sequence spans 474 residues: Bifunctional ribulose 5-phosphate reductase/CDP-ribitol pyrophosphorylase Bcs1 (474 aa).

Residues 1 to 238 are ribitol-5-phosphate cytidylyltransferase; sequence MNKNKNIGII…DKLFQSRSHF (238 aa). The segment at 250-474 is ribulose-5-phosphate reductase; it reads YDMKDQVLVV…ITNILADLYK (225 aa).

The protein in the N-terminal section; belongs to the IspD/TarI cytidylyltransferase family. It in the C-terminal section; belongs to the short-chain dehydrogenases/reductases (SDR) family. Monomer.

The catalysed reaction is D-ribitol 5-phosphate + CTP + H(+) = CDP-L-ribitol + diphosphate. It catalyses the reaction D-ribitol 5-phosphate + NADP(+) = D-ribulose 5-phosphate + NADPH + H(+). The protein operates within capsule biogenesis; capsule polysaccharide biosynthesis. In terms of biological role, catalyzes the NADPH-dependent reduction of D-ribulose 5-phosphate to D-ribitol 5-phosphate and the further reaction of D-ribitol 5-phosphate with CTP to form CDP-ribitol. In Haemophilus influenzae, this protein is Bifunctional ribulose 5-phosphate reductase/CDP-ribitol pyrophosphorylase Bcs1.